A 197-amino-acid polypeptide reads, in one-letter code: Dephospho-CoA kinase (197 aa).

A DPCK domain is found at 3 to 197 (ILGLTGSIAM…TGCLVGQGSR (195 aa)). 11–16 (AMGKST) serves as a coordination point for ATP.

This sequence belongs to the CoaE family.

The protein localises to the cytoplasm. It carries out the reaction 3'-dephospho-CoA + ATP = ADP + CoA + H(+). It participates in cofactor biosynthesis; coenzyme A biosynthesis; CoA from (R)-pantothenate: step 5/5. In terms of biological role, catalyzes the phosphorylation of the 3'-hydroxyl group of dephosphocoenzyme A to form coenzyme A. The sequence is that of Dephospho-CoA kinase from Zymomonas mobilis subsp. mobilis (strain ATCC 31821 / ZM4 / CP4).